A 340-amino-acid polypeptide reads, in one-letter code: Ketol-acid reductoisomerase (NADP(+)) (340 aa).

The region spanning 1–182 is the KARI N-terminal Rossmann domain; it reads MRVYYDRDCD…GGGRSGIIET (182 aa). NADP(+) is bound by residues 24–27, Arg48, Ser51, Ser53, and 83–86; these read YGSQ and DELQ. The active site involves His108. Gly134 is an NADP(+) binding site. The KARI C-terminal knotted domain occupies 183 to 329; that stretch reads NFRQECETDL…EKLRGMMPWI (147 aa). Mg(2+)-binding residues include Asp191, Glu195, Glu227, and Glu231. Ser252 serves as a coordination point for substrate.

This sequence belongs to the ketol-acid reductoisomerase family. Requires Mg(2+) as cofactor.

The catalysed reaction is (2R)-2,3-dihydroxy-3-methylbutanoate + NADP(+) = (2S)-2-acetolactate + NADPH + H(+). It catalyses the reaction (2R,3R)-2,3-dihydroxy-3-methylpentanoate + NADP(+) = (S)-2-ethyl-2-hydroxy-3-oxobutanoate + NADPH + H(+). It participates in amino-acid biosynthesis; L-isoleucine biosynthesis; L-isoleucine from 2-oxobutanoate: step 2/4. The protein operates within amino-acid biosynthesis; L-valine biosynthesis; L-valine from pyruvate: step 2/4. In terms of biological role, involved in the biosynthesis of branched-chain amino acids (BCAA). Catalyzes an alkyl-migration followed by a ketol-acid reduction of (S)-2-acetolactate (S2AL) to yield (R)-2,3-dihydroxy-isovalerate. In the isomerase reaction, S2AL is rearranged via a Mg-dependent methyl migration to produce 3-hydroxy-3-methyl-2-ketobutyrate (HMKB). In the reductase reaction, this 2-ketoacid undergoes a metal-dependent reduction by NADPH to yield (R)-2,3-dihydroxy-isovalerate. The protein is Ketol-acid reductoisomerase (NADP(+)) of Paracoccus denitrificans (strain Pd 1222).